A 318-amino-acid polypeptide reads, in one-letter code: 2-desacetyl-2-hydroxyethyl bacteriochlorophyllide A dehydrogenase (318 aa).

It participates in porphyrin-containing compound metabolism; bacteriochlorophyll biosynthesis (light-independent). This protein catalyzes the penultimate step in bacteriochlorophyll a biosynthesis. The chain is 2-desacetyl-2-hydroxyethyl bacteriochlorophyllide A dehydrogenase (bchC) from Cereibacter sphaeroides (strain ATCC 17023 / DSM 158 / JCM 6121 / CCUG 31486 / LMG 2827 / NBRC 12203 / NCIMB 8253 / ATH 2.4.1.) (Rhodobacter sphaeroides).